We begin with the raw amino-acid sequence, 218 residues long: Small ribosomal subunit protein uS5 (218 aa).

The disordered stretch occupies residues 1–45 (MPGRQRRDGGNGPAGQNSNGPEGRDNRRGGGDRRGGGDRRDNAAE). Residues 22-45 (EGRDNRRGGGDRRGGGDRRDNAAE) are compositionally biased toward basic and acidic residues. One can recognise an S5 DRBM domain in the interval 48-111 (QLERVVAINR…EEARKGFFRV (64 aa)).

The protein belongs to the universal ribosomal protein uS5 family. In terms of assembly, part of the 30S ribosomal subunit. Contacts proteins S4 and S8.

With S4 and S12 plays an important role in translational accuracy. In terms of biological role, located at the back of the 30S subunit body where it stabilizes the conformation of the head with respect to the body. The sequence is that of Small ribosomal subunit protein uS5 from Nocardia farcinica (strain IFM 10152).